Reading from the N-terminus, the 955-residue chain is MLKLLLGDPNARKLKRYQPIVSDINLLEEEVSPLSDDDLRRRTAEFRQRLDNAGSLDQQRPVLDELLPEAFAVVREAGKRVLGMRHFDVQLIGGMVLHEGQIAEMKTGEGKTLVATLPSFLNALTGRGVHVVTVNDYLARRDAEWMGQVHRFLGLSVGLIQQDMTPAERRRNYGCDITYATNSELGFDYLRDNMAADINEVVQREFQYCVIDEVDSILIDEARTPLIISGQVERPQEKYQKAAEVAAALTRAAEMGKDGIDPEGDYEVDEKQRSCTLTDEGFAKAEQMIGVADLYDPQDPWAHYITNALKAKDLFTRDVNYIVRDGEAVIVDEFTGRVMPGRRWSDGQHQAIEAKEALAIQPETQTLASITYQNFFLLYPRLAGMTGTAKTEETEFEKTYKLETTIVPTNRVRARQDWVDQVYKTEEAKWRAVAKETAEVHQQGRPVLVGTTSVEKSELLSALLAEEDIPHNLLNAKPENVEREAEIVAQAGRSGAVTIATNMAGRGTDIILGGNSDYMARLKLREVLLSRLVRPEEGHRPPVPLQRSGAEGGGGFAAKAAPASGPHGHAPSEARAIGSLYPCQLTEDTDQALADLAKDLVKAWGDRALTVIELEDHIATAAEKAPTDDPAIAALRAAIARVKGEYDDVVKQEEQRVREAGGLHVIGTERHESRRVDNQLRGRAGRQGDPGSTRFFLSLGDNLLRIFGGDRVAGLMNAFRVEEDMPIESGMLTRSLEGAQKKVETYYYDIRKQVFEYDEVMNNQRKAVYSERRRVLEGRELKKQVVGYGERTMNEIVEAYVNPDLPPEEWDVTQLVSKVQEFVYLLDDLQADQLQGLSMDELKAFLQEQLRNAYDLKEGQIEDQRPGLMREAERFFILQQIDTLWREHLQSMDALRESVGLRGYGQKDPLIEYKNEGYDMFLDMMTNMRRNVIYSMFMFQPAPPAGQSAGQRTTA.

Residues glutamine 90, 108–112 (GEGKT), and aspartate 509 each bind ATP. Residues 537–571 (EGHRPPVPLQRSGAEGGGGFAAKAAPASGPHGHAP) form a disordered region. Residues 557 to 571 (AAKAAPASGPHGHAP) show a composition bias toward low complexity.

The protein belongs to the SecA family. As to quaternary structure, monomer and homodimer. Part of the essential Sec protein translocation apparatus which comprises SecA, SecYEG and auxiliary proteins SecDF. Other proteins may also be involved.

The protein resides in the cell inner membrane. It is found in the cellular thylakoid membrane. Its subcellular location is the cytoplasm. It carries out the reaction ATP + H2O + cellular proteinSide 1 = ADP + phosphate + cellular proteinSide 2.. Functionally, part of the Sec protein translocase complex. Interacts with the SecYEG preprotein conducting channel. Has a central role in coupling the hydrolysis of ATP to the transfer of proteins into and across the cell membrane, serving as an ATP-driven molecular motor driving the stepwise translocation of polypeptide chains across the membrane. Its function is as follows. Probably participates in protein translocation into and across both the cytoplasmic and thylakoid membranes in cyanobacterial cells. This Synechococcus sp. (strain WH7803) protein is Protein translocase subunit SecA.